The sequence spans 847 residues: Capsid-associated protein AC83 (847 aa).

The N-terminal stretch at Met-1–Thr-19 is a signal peptide. The segment at Cys-148–Cys-197 adopts a C2HC BV-type zinc-finger fold. Residues Asn-156 and Asn-211 are each glycosylated (N-linked (GlcNAc...) asparagine; by host). 2 cysteine pairs are disulfide-bonded: Cys-208–Cys-221 and Cys-261–Cys-274. The 59-residue stretch at Asn-224–Phe-282 folds into the Chitin-binding type-2 domain. Residues Asn-306, Asn-337, Asn-500, Asn-592, Asn-613, and Asn-639 are each glycosylated (N-linked (GlcNAc...) asparagine; by host). The interval Asp-665–Pro-698 is disordered. Acidic residues predominate over residues Pro-681–Pro-693.

It localises to the virion. In terms of biological role, plays an essential role in nucleocapsid assembly. Essential for the establishment of efficient per os infection. The chain is Capsid-associated protein AC83 (p95) from Autographa californica nuclear polyhedrosis virus (AcMNPV).